The following is a 472-amino-acid chain: Ribulose bisphosphate carboxylase/oxygenase activase, chloroplastic (472 aa).

The transit peptide at 1-58 (MATAVSTVGAATRAPLNLNGSSAGASVPTSGFLGSSLKKHTNVRFPSSSRTTSMTVKA) directs the protein to the chloroplast. 163 to 170 (GGKGQGKS) is a binding site for ATP. The tract at residues 448 to 472 (GCTDPEAKNYDPTARSDDGSCTYNL) is disordered. Positions 452–465 (PEAKNYDPTARSDD) are enriched in basic and acidic residues.

This sequence belongs to the RuBisCO activase family.

It localises to the plastid. It is found in the chloroplast stroma. Functionally, activation of RuBisCO (ribulose-1,5-bisphosphate carboxylase/oxygenase; EC 4.1.1.39) involves the ATP-dependent carboxylation of the epsilon-amino group of lysine leading to a carbamate structure. The polypeptide is Ribulose bisphosphate carboxylase/oxygenase activase, chloroplastic (Spinacia oleracea (Spinach)).